Here is a 395-residue protein sequence, read N- to C-terminus: Nickel and cobalt resistance protein CnrB (395 aa).

The chain crosses the membrane as a helical span at residues 13–33; the sequence is MIAGVAAVAAAVGFGAAHLPV. Residues 35-55 form a disordered region; sequence EKSPASTQAPEAQKPQSAPVK. The span at 37 to 50 shows a compositional bias: polar residues; the sequence is SPASTQAPEAQKPQ. Residues 140–193 are a coiled coil; the sequence is AAERKVAQAKADLARKTYEREASLFQQGVTPRQEMEAAKAALDVAQAEALRAAT.

Belongs to the membrane fusion protein (MFP) (TC 8.A.1) family.

The protein resides in the cell inner membrane. The products of the genes cnrA, cnrB, and cnrC are likely to form a membrane-bound protein complex catalyzing an energy-dependent efflux of Ni(2+) and Co(2+). The mechanism of action of the CnrCBA complex may be that of a proton/cation antiporter. The polypeptide is Nickel and cobalt resistance protein CnrB (cnrB) (Cupriavidus metallidurans (strain ATCC 43123 / DSM 2839 / NBRC 102507 / CH34) (Ralstonia metallidurans)).